The primary structure comprises 445 residues: MVSFRGLTTLTLLFTKLVNCNPVSTKNRDSIQFIYKEKDSIYSAINNQAINEKIHGVNLGGWLVLEPYITPSLFETFRTNPYNDDGIPVDEYHFCEKLGYEKAKERLYSHWSTFYKEEDFAKIASQGFNLVRIPIGYWAFTTLSHDPYVTAEQEYFLDRAIDWARKYGLKVWIDLHGAAGSQNGFDNSGLRDSYKFLEDENLSATMKALTYILSKYSTDVYLDTVIGIELLNEPLGPVIDMERLKNLLLKPAYDYLRNKINSNQIIVIHDAFQPYHYWDGFLNDEKNEYGVIIDHHHYQVFSQVELTRKMNERIKIACQWGKDAVSEKHWSVAGEFSAALTDCTKWLNGVGLGARYDGSWTKDNEKSHYINTCANNENIALWPEERKQNTRKFIEAQLDAFEMTGGWIMWCYKTENSIEWDVEKLIQLNIFPQPINDRKYPNQCH.

Residues 1–21 (MVSFRGLTTLTLLFTKLVNCN) form the signal peptide. An N-linked (GlcNAc...) asparagine glycan is attached at Asn-201. Glu-233 acts as the Proton donor in catalysis. Glu-335 (nucleophile) is an active-site residue.

This sequence belongs to the glycosyl hydrolase 5 (cellulase A) family.

It is found in the secreted. It catalyses the reaction Successive hydrolysis of beta-D-glucose units from the non-reducing ends of (1-&gt;3)-beta-D-glucans, releasing alpha-glucose.. In terms of biological role, probably involved in the processes of spore formation and contributes to ascospore thermoresistance by participating in the morphogenesis of ascospore walls. The enzyme may do this by modifying glucan linkages in the developing ascospore wall, thus strengthening it or lending it plasticity. The polypeptide is Sporulation-specific glucan 1,3-beta-glucosidase (SPR1) (Saccharomyces cerevisiae (strain ATCC 204508 / S288c) (Baker's yeast)).